Reading from the N-terminus, the 58-residue chain is Small ribosomal subunit protein bS21 (58 aa).

The segment covering 32–42 (IRKREHYEKPS) has biased composition (basic and acidic residues). A disordered region spans residues 32–58 (IRKREHYEKPSVRRKKKSEAARKRKFN). Over residues 43–58 (VRRKKKSEAARKRKFN) the composition is skewed to basic residues.

Belongs to the bacterial ribosomal protein bS21 family.

The chain is Small ribosomal subunit protein bS21 from Lachnospira eligens (strain ATCC 27750 / DSM 3376 / VPI C15-48 / C15-B4) (Eubacterium eligens).